Consider the following 381-residue polypeptide: Creatine kinase M-type (381 aa).

The Phosphagen kinase N-terminal domain occupies 11-98; the sequence is KLNFKAEEEY…FDPIIQDRHG (88 aa). The region spanning 125 to 367 is the Phosphagen kinase C-terminal domain; sequence YVLSSRVRTG…KLMVEMEKKL (243 aa). ATP is bound at residue 128–132; it reads SSRVR. Ser164 carries the phosphoserine modification. Thr166 bears the Phosphothreonine mark. The residue at position 178 (Ser178) is a Phosphoserine. At Thr180 the chain carries Phosphothreonine. Residue His191 coordinates ATP. Ser199 is subject to Phosphoserine. ATP contacts are provided by Arg236 and Arg292. 2 positions are modified to phosphothreonine: Thr313 and Thr322. Residues 320–325 and Asp335 contribute to the ATP site; that span reads RGTGGV. A Phosphoserine modification is found at Ser372.

This sequence belongs to the ATP:guanido phosphotransferase family. In terms of assembly, dimer of identical or non-identical chains, which can be either B (brain type) or M (muscle type). With MM being the major form in skeletal muscle and myocardium, MB existing in myocardium, and BB existing in many tissues, especially brain.

It is found in the cytoplasm. The catalysed reaction is creatine + ATP = N-phosphocreatine + ADP + H(+). In terms of biological role, reversibly catalyzes the transfer of phosphate between ATP and various phosphogens (e.g. creatine phosphate). Creatine kinase isoenzymes play a central role in energy transduction in tissues with large, fluctuating energy demands, such as skeletal muscle, heart, brain and spermatozoa. This chain is Creatine kinase M-type (CKM), found in Bos taurus (Bovine).